The sequence spans 561 residues: Sesquiterpene synthase 1 (561 aa).

Asp313, Asp317, Asp458, and Glu466 together coordinate Mg(2+). The DDXXD motif motif lies at Asp313–Asp317.

It belongs to the terpene synthase family. Tpsa subfamily. Mn(2+) is required as a cofactor. Mg(2+) serves as cofactor.

The protein resides in the cytoplasm. The catalysed reaction is (2E,6E)-farnesyl diphosphate = (1S,8aR)-delta-cadinene + diphosphate. The protein operates within secondary metabolite biosynthesis; terpenoid biosynthesis. Its function is as follows. Involved in the biosynthesis of delta-cadinene. This chain is Sesquiterpene synthase 1 (STS1), found in Thapsia garganica (Deadly carrot).